Reading from the N-terminus, the 621-residue chain is Zinc metalloproteinase-disintegrin-like NaMP (621 aa).

The signal sequence occupies residues Met-1–Ser-20. Positions Thr-21 to Ile-188 are excised as a propeptide. Positions Lys-206–Pro-402 constitute a Peptidase M12B domain. 3 N-linked (GlcNAc...) asparagine glycosylation sites follow: Asn-225, Asn-268, and Asn-319. Intrachain disulfides connect Cys-317-Cys-397, Cys-357-Cys-381, Cys-359-Cys-364, Cys-413-Cys-442, Cys-424-Cys-437, Cys-426-Cys-432, Cys-436-Cys-459, Cys-450-Cys-456, Cys-455-Cys-481, Cys-468-Cys-488, Cys-475-Cys-507, Cys-500-Cys-512, Cys-519-Cys-569, Cys-534-Cys-579, Cys-547-Cys-557, Cys-564-Cys-605, and Cys-599-Cys-610. Residue His-342 participates in Zn(2+) binding. The active site involves Glu-343. Residues His-346 and His-352 each contribute to the Zn(2+) site. The region spanning Thr-410 to Asn-496 is the Disintegrin domain. Positions Asp-474 to Asp-476 match the D/ECD-tripeptide motif. Asn-551 is a glycosylation site (N-linked (GlcNAc...) asparagine).

It belongs to the venom metalloproteinase (M12B) family. P-III subfamily. P-IIIa sub-subfamily. In terms of assembly, monomer. Zn(2+) serves as cofactor. In terms of tissue distribution, expressed by the venom gland.

Its subcellular location is the secreted. In terms of biological role, snake venom zinc metalloproteinase that inhibits platelet aggregation and degrades fibrinogen. The protein is Zinc metalloproteinase-disintegrin-like NaMP of Naja atra (Chinese cobra).